The sequence spans 109 residues: FAD assembly factor SdhE (109 aa).

Residues 1 to 22 (MQDNFTASSPSSSSSASGVAED) are disordered. Positions 7-17 (ASSPSSSSSAS) are enriched in low complexity.

The protein belongs to the SdhE FAD assembly factor family.

The protein resides in the cytoplasm. In terms of biological role, an FAD assembly protein, which accelerates covalent attachment of the cofactor into other proteins. Plays an essential role in the assembly of succinate dehydrogenase (SDH, respiratory complex II), an enzyme complex that is a component of both the tricarboxylic acid cycle and the electron transport chain, and which couples the oxidation of succinate to fumarate with the reduction of ubiquinone (coenzyme Q) to ubiquinol. Required for flavinylation of SdhA, when the SDH operon and this gene are overexpressed in G.oxydans. Flavinylation of SdhA is detected only in the presence of sdhE. This chain is FAD assembly factor SdhE, found in Acetobacter pasteurianus (strain NBRC 105184 / IFO 3283-01).